A 347-amino-acid chain; its full sequence is NADH-ubiquinone oxidoreductase chain 2 (347 aa).

The next 11 membrane-spanning stretches (helical) occupy residues 3-23 (PLIMSIILATIILGTTIVMTG), 25-45 (HWLMIWIGFEMNMLAIIPMLM), 59-79 (YFFTQATASMLLMLAGIINLM), 96-116 (IIMTLALAMKLGLAPFHFWVP), 127-147 (GLILLTWQKLASMTGLYMISP), 148-168 (GINLNMLMTMSMLSIAIGGWG), 178-198 (IMAYSSIAHMGWMTAILIYNP), 201-221 (TLLNLVIYILMTTTMFMLFMI), 247-267 (TLLSMGGLPPLMGFLPKWMII), 276-296 (IVLPTIMAITALLNLFFYMRL), and 325-345 (LLTPMIMMSTLTLPLAPMMMI).

Belongs to the complex I subunit 2 family. Core subunit of respiratory chain NADH dehydrogenase (Complex I) which is composed of 45 different subunits. Interacts with TMEM242.

The protein resides in the mitochondrion inner membrane. The catalysed reaction is a ubiquinone + NADH + 5 H(+)(in) = a ubiquinol + NAD(+) + 4 H(+)(out). Core subunit of the mitochondrial membrane respiratory chain NADH dehydrogenase (Complex I) which catalyzes electron transfer from NADH through the respiratory chain, using ubiquinone as an electron acceptor. Essential for the catalytic activity and assembly of complex I. The polypeptide is NADH-ubiquinone oxidoreductase chain 2 (Ozimops beccarii (Beccari's free-tailed bat)).